Consider the following 390-residue polypeptide: Digeranylgeranylglycerophospholipid reductase (390 aa).

Ala18, Glu37, Cys48, Ala49, Ala51, Arg98, Val122, Asp278, Gly290, and Ile291 together coordinate FAD. Val368 serves as a coordination point for a 2,3-bis-O-(geranylgeranyl)-sn-glycerol 1-phospholipid.

This sequence belongs to the geranylgeranyl reductase family. DGGGPL reductase subfamily. The cofactor is FAD.

It catalyses the reaction a 2,3-bis-O-phytanyl-sn-glycerol 1-phospholipid + 8 A = a 2,3-bis-O-(geranylgeranyl)-sn-glycerol 1-phospholipid + 8 AH2. The catalysed reaction is 2,3-bis-O-(phytanyl)-sn-glycerol 1-phosphate + 8 A = 2,3-bis-O-(geranylgeranyl)-sn-glycerol 1-phosphate + 8 AH2. The enzyme catalyses CDP-2,3-bis-O-(geranylgeranyl)-sn-glycerol + 8 AH2 = CDP-2,3-bis-O-(phytanyl)-sn-glycerol + 8 A. It carries out the reaction archaetidylserine + 8 AH2 = 2,3-bis-O-phytanyl-sn-glycero-3-phospho-L-serine + 8 A. Its pathway is membrane lipid metabolism; glycerophospholipid metabolism. Its function is as follows. Is involved in the reduction of 2,3-digeranylgeranylglycerophospholipids (unsaturated archaeols) into 2,3-diphytanylglycerophospholipids (saturated archaeols) in the biosynthesis of archaeal membrane lipids. Catalyzes the formation of archaetidic acid (2,3-di-O-phytanyl-sn-glyceryl phosphate) from 2,3-di-O-geranylgeranylglyceryl phosphate (DGGGP) via the hydrogenation of each double bond of the isoprenoid chains. Is also probably able to reduce double bonds of geranyl groups in CDP-2,3-bis-O-(geranylgeranyl)-sn-glycerol and archaetidylserine, thus acting at various stages in the biosynthesis of archaeal membrane lipids. This chain is Digeranylgeranylglycerophospholipid reductase, found in Methanococcus vannielii (strain ATCC 35089 / DSM 1224 / JCM 13029 / OCM 148 / SB).